The chain runs to 500 residues: Tektin-like protein 1 (500 aa).

The interval 1–25 (MPVLLPSTDRDQDSRVGAPEWHQAA) is disordered. Serine 14 carries the phosphoserine modification. The stretch at 198–229 (MLVWEREELKSMKRKMEKDMERSEALLKALAS) forms a coiled coil. A disordered region spans residues 265 to 286 (VDITRPPTPRTQGLKTPPPDPV). Residue tyrosine 372 is modified to Phosphotyrosine. Residues 422–448 (LTRHNLQMEKNLKELRTTHDNLAWSLN) are a coiled coil.

In terms of assembly, microtubule inner protein component of sperm flagellar doublet microtubules.

It localises to the cytoplasm. Its subcellular location is the cytoskeleton. The protein localises to the flagellum axoneme. Its function is as follows. Microtubule inner protein (MIP) part of the dynein-decorated doublet microtubules (DMTs) in sperm flagellar axoneme, which is required for motile flagellum beating. Forms an extensive interaction network cross-linking the lumen of axonemal doublet microtubules. This chain is Tektin-like protein 1, found in Rattus norvegicus (Rat).